Here is a 549-residue protein sequence, read N- to C-terminus: RNA-induced transcriptional silencing complex protein tas3 (549 aa).

5 disordered regions span residues lysine 89–serine 111, aspartate 126–isoleucine 184, isoleucine 202–serine 225, leucine 298–lysine 361, and alanine 381–serine 430. Polar residues predominate over residues leucine 298–glutamine 307. Basic and acidic residues-rich tracts occupy residues tyrosine 328–lysine 361 and serine 403–threonine 416. A compositionally biased stretch (polar residues) spans leucine 419 to serine 430.

In terms of assembly, ago1, chp1 and tas3 interact to form the core of the RNA-induced transcriptional silencing (RITS) complex. The RITS complex interacts with the RDRC complex via interaction between ago1 and hrr1. Clr4 has a role in mediating this interaction.

The protein localises to the nucleus. Its subcellular location is the cytoplasm. It is found in the cytoskeleton. It localises to the microtubule organizing center. The protein resides in the spindle pole body. Has a role in the RNA interference (RNAi) pathway which is important for heterochromatin formation and accurate chromosome segregation. A member of the RNA-induced transcriptional silencing (RITS) complex which is involved in the biosynthesis of dsRNA from primer siRNAs provided by the RNA-directed RNA polymerase (RDRC) complex. The chain is RNA-induced transcriptional silencing complex protein tas3 (tas3) from Schizosaccharomyces pombe (strain 972 / ATCC 24843) (Fission yeast).